We begin with the raw amino-acid sequence, 438 residues long: Probable glucose-6-phosphate isomerase (438 aa).

The Proton donor role is filled by glutamate 280. Active-site residues include histidine 301 and lysine 410.

Belongs to the GPI family.

The protein localises to the cytoplasm. The catalysed reaction is alpha-D-glucose 6-phosphate = beta-D-fructose 6-phosphate. The protein operates within carbohydrate biosynthesis; gluconeogenesis. It functions in the pathway carbohydrate degradation; glycolysis; D-glyceraldehyde 3-phosphate and glycerone phosphate from D-glucose: step 2/4. Catalyzes the reversible isomerization of glucose-6-phosphate to fructose-6-phosphate. The sequence is that of Probable glucose-6-phosphate isomerase from Methanococcus maripaludis (strain DSM 14266 / JCM 13030 / NBRC 101832 / S2 / LL).